A 302-amino-acid polypeptide reads, in one-letter code: Sulfate adenylyltransferase subunit 2 (302 aa).

The protein belongs to the PAPS reductase family. CysD subfamily. As to quaternary structure, heterodimer composed of CysD, the smaller subunit, and CysN.

It catalyses the reaction sulfate + ATP + H(+) = adenosine 5'-phosphosulfate + diphosphate. The protein operates within sulfur metabolism; hydrogen sulfide biosynthesis; sulfite from sulfate: step 1/3. With CysN forms the ATP sulfurylase (ATPS) that catalyzes the adenylation of sulfate producing adenosine 5'-phosphosulfate (APS) and diphosphate, the first enzymatic step in sulfur assimilation pathway. APS synthesis involves the formation of a high-energy phosphoric-sulfuric acid anhydride bond driven by GTP hydrolysis by CysN coupled to ATP hydrolysis by CysD. In Shewanella halifaxensis (strain HAW-EB4), this protein is Sulfate adenylyltransferase subunit 2.